The primary structure comprises 317 residues: Methionyl-tRNA formyltransferase (317 aa).

112–115 (SILP) serves as a coordination point for (6S)-5,6,7,8-tetrahydrofolate.

This sequence belongs to the Fmt family.

It carries out the reaction L-methionyl-tRNA(fMet) + (6R)-10-formyltetrahydrofolate = N-formyl-L-methionyl-tRNA(fMet) + (6S)-5,6,7,8-tetrahydrofolate + H(+). Its function is as follows. Attaches a formyl group to the free amino group of methionyl-tRNA(fMet). The formyl group appears to play a dual role in the initiator identity of N-formylmethionyl-tRNA by promoting its recognition by IF2 and preventing the misappropriation of this tRNA by the elongation apparatus. The protein is Methionyl-tRNA formyltransferase of Mannheimia succiniciproducens (strain KCTC 0769BP / MBEL55E).